The following is a 76-amino-acid chain: Exodeoxyribonuclease 7 small subunit (76 aa).

This sequence belongs to the XseB family. Heterooligomer composed of large and small subunits.

The protein localises to the cytoplasm. It carries out the reaction Exonucleolytic cleavage in either 5'- to 3'- or 3'- to 5'-direction to yield nucleoside 5'-phosphates.. In terms of biological role, bidirectionally degrades single-stranded DNA into large acid-insoluble oligonucleotides, which are then degraded further into small acid-soluble oligonucleotides. This Legionella pneumophila subsp. pneumophila (strain Philadelphia 1 / ATCC 33152 / DSM 7513) protein is Exodeoxyribonuclease 7 small subunit.